Here is a 576-residue protein sequence, read N- to C-terminus: Calcium-dependent protein kinase 11 (576 aa).

Gly2 carries the N-myristoyl glycine lipid modification. Residues 27-88 (PADAAPPALP…ANKAAPKVKR (62 aa)) form a disordered region. Low complexity predominate over residues 41–56 (APSDQAPEPVTIPPSE). The region spanning 113–371 (YTIGKKLGQG…AHEALCHPWV (259 aa)) is the Protein kinase domain. Residues 119–127 (LGQGQFGTT) and Lys142 each bind ATP. Asp237 serves as the catalytic Proton acceptor. Positions 377-407 (APDKPLDSAVLSRLKQFSAMNKLKKMALRVI) are autoinhibitory domain. EF-hand domains lie at 414–449 (EEIA…VGAN), 450–485 (LMDS…INKV), 486–521 (EKED…FGIG), and 522–555 (DTRI…GNNA). Residues Asp427, Asp429, Ser431, His433, Glu438, Asp463, Asp465, Ser467, Thr469, Glu474, Asp499, Asp501, Ser503, Tyr505, Glu510, Asp533, Asp535, Asp537, Arg539, and Glu544 each coordinate Ca(2+).

It belongs to the protein kinase superfamily. Ser/Thr protein kinase family. CDPK subfamily.

It is found in the membrane. It catalyses the reaction L-seryl-[protein] + ATP = O-phospho-L-seryl-[protein] + ADP + H(+). It carries out the reaction L-threonyl-[protein] + ATP = O-phospho-L-threonyl-[protein] + ADP + H(+). Activated by calcium. Autophosphorylation may play an important role in the regulation of the kinase activity. Functionally, may play a role in signal transduction pathways that involve calcium as a second messenger. This chain is Calcium-dependent protein kinase 11, found in Oryza sativa subsp. japonica (Rice).